Reading from the N-terminus, the 319-residue chain is ATP-dependent 6-phosphofructokinase (319 aa).

Gly11 provides a ligand contact to ATP. 21 to 25 contributes to the ADP binding site; sequence RAVVR. ATP is bound by residues 72-73 and 102-105; these read RC and GDGS. Asp103 lines the Mg(2+) pocket. 125–127 lines the substrate pocket; the sequence is TID. The Proton acceptor role is filled by Asp127. Arg154 provides a ligand contact to ADP. Residues Arg162 and 169 to 171 each bind substrate; that span reads MGR. ADP-binding positions include 185-187, Arg211, and 213-215; these read GAE and KLH. Substrate-binding positions include Glu222, Arg243, and 249-252; that span reads HIQR.

It belongs to the phosphofructokinase type A (PFKA) family. ATP-dependent PFK group I subfamily. Prokaryotic clade 'B1' sub-subfamily. In terms of assembly, homotetramer. It depends on Mg(2+) as a cofactor.

It localises to the cytoplasm. It carries out the reaction beta-D-fructose 6-phosphate + ATP = beta-D-fructose 1,6-bisphosphate + ADP + H(+). It participates in carbohydrate degradation; glycolysis; D-glyceraldehyde 3-phosphate and glycerone phosphate from D-glucose: step 3/4. Its activity is regulated as follows. Allosterically activated by ADP and other diphosphonucleosides, and allosterically inhibited by phosphoenolpyruvate. Catalyzes the phosphorylation of D-fructose 6-phosphate to fructose 1,6-bisphosphate by ATP, the first committing step of glycolysis. This chain is ATP-dependent 6-phosphofructokinase, found in Alkaliphilus metalliredigens (strain QYMF).